Here is a 966-residue protein sequence, read N- to C-terminus: RNA polymerase-associated protein RapA (966 aa).

Residues 163–337 enclose the Helicase ATP-binding domain; that stretch reads EVGQRLHPRV…FARLKLLDAD (175 aa). Residue 176-183 coordinates ATP; that stretch reads DEVGLGKT. A DEAH box motif is present at residues 283–286; it reads DEAH. Residues 488–642 enclose the Helicase C-terminal domain; the sequence is RVEWLITFLK…ICPMGMALFE (155 aa).

Belongs to the SNF2/RAD54 helicase family. RapA subfamily. In terms of assembly, interacts with the RNAP. Has a higher affinity for the core RNAP than for the holoenzyme. Its ATPase activity is stimulated by binding to RNAP.

In terms of biological role, transcription regulator that activates transcription by stimulating RNA polymerase (RNAP) recycling in case of stress conditions such as supercoiled DNA or high salt concentrations. Probably acts by releasing the RNAP, when it is trapped or immobilized on tightly supercoiled DNA. Does not activate transcription on linear DNA. Probably not involved in DNA repair. The chain is RNA polymerase-associated protein RapA from Actinobacillus succinogenes (strain ATCC 55618 / DSM 22257 / CCUG 43843 / 130Z).